A 190-amino-acid chain; its full sequence is Secretory phospholipase A2 (190 aa).

A signal peptide spans 1 to 15; the sequence is MKLAYFSSLLPLALA. C62 and C78 are disulfide-bonded. A65 is a Ca(2+) binding site. H81 is a catalytic residue. D82 lines the Ca(2+) pocket.

The protein belongs to the phospholipase A2 family. Requires Ca(2+) as cofactor.

Its subcellular location is the lipid droplet. It is found in the secreted. The catalysed reaction is a 1,2-diacyl-sn-glycero-3-phosphocholine + H2O = a 1-acyl-sn-glycero-3-phosphocholine + a fatty acid + H(+). Secretory phospholipase that catalyzes the calcium-dependent hydrolysis of the 2-acyl groups in 3-sn-phosphoglycerides. Increases the ability to utilize insect-derived nutrients and lipids, and promotes lipid dropplets accumulation. Plays a role in virulence, including more efficient penetration of the insect cuticle and evasion of host immune response by repressing the expression of host immunity genes. The chain is Secretory phospholipase A2 from Beauveria bassiana (strain ARSEF 2860) (White muscardine disease fungus).